The chain runs to 610 residues: Elongation factor 4 (610 aa).

Residues 11–193 (EKIRNFSIIA…QIVEKVPAPT (183 aa)) form the tr-type G domain. Residues 23 to 28 (DHGKST) and 140 to 143 (NKID) contribute to the GTP site.

The protein belongs to the TRAFAC class translation factor GTPase superfamily. Classic translation factor GTPase family. LepA subfamily.

It localises to the cell membrane. It carries out the reaction GTP + H2O = GDP + phosphate + H(+). Functionally, required for accurate and efficient protein synthesis under certain stress conditions. May act as a fidelity factor of the translation reaction, by catalyzing a one-codon backward translocation of tRNAs on improperly translocated ribosomes. Back-translocation proceeds from a post-translocation (POST) complex to a pre-translocation (PRE) complex, thus giving elongation factor G a second chance to translocate the tRNAs correctly. Binds to ribosomes in a GTP-dependent manner. This chain is Elongation factor 4, found in Streptococcus agalactiae serotype Ia (strain ATCC 27591 / A909 / CDC SS700).